The chain runs to 468 residues: 3-isopropylmalate dehydratase large subunit (468 aa).

[4Fe-4S] cluster contacts are provided by Cys347, Cys407, and Cys410.

It belongs to the aconitase/IPM isomerase family. LeuC type 1 subfamily. Heterodimer of LeuC and LeuD. Requires [4Fe-4S] cluster as cofactor.

The catalysed reaction is (2R,3S)-3-isopropylmalate = (2S)-2-isopropylmalate. It functions in the pathway amino-acid biosynthesis; L-leucine biosynthesis; L-leucine from 3-methyl-2-oxobutanoate: step 2/4. Its function is as follows. Catalyzes the isomerization between 2-isopropylmalate and 3-isopropylmalate, via the formation of 2-isopropylmaleate. The polypeptide is 3-isopropylmalate dehydratase large subunit (Synechococcus elongatus (strain ATCC 33912 / PCC 7942 / FACHB-805) (Anacystis nidulans R2)).